Consider the following 226-residue polypeptide: Pre-mRNA-splicing factor SPF27 (226 aa).

An N-acetylalanine modification is found at A2. S94 is modified (phosphoserine). The stretch at 139-223 forms a coiled coil; sequence YNENLVHMIE…HGEANKENIR (85 aa).

This sequence belongs to the SPF27 family. As to quaternary structure, component of the pre-catalytic and catalytic spliceosome complexes. Component of the postcatalytic spliceosome P complex. Component of the PRP19-CDC5L splicing complex composed of a core complex comprising a homotetramer of PRPF19, CDC5L, PLRG1 and BCAS2, and at least three less stably associated proteins CTNNBL1, CWC15 and HSPA8. Interacts directly in the complex with PRPF19, CDC5L and PLRG1.

It is found in the nucleus. The protein localises to the nucleolus. Required for pre-mRNA splicing as component of the activated spliceosome. Component of the PRP19-CDC5L complex that forms an integral part of the spliceosome and is required for activating pre-mRNA splicing. May have a scaffolding role in the spliceosome assembly as it contacts all other components of the core complex. The PRP19-CDC5L complex may also play a role in the response to DNA damage (DDR). This is Pre-mRNA-splicing factor SPF27 (BCAS2) from Pongo abelii (Sumatran orangutan).